The chain runs to 392 residues: Probable glycerol-3-phosphate dehydrogenase 2 (392 aa).

NAD(+) contacts are provided by residues 42–47, Phe130, Lys153, and Ala196; that span reads GSGNWG. Lys153 is a substrate binding site. Catalysis depends on Lys248, which acts as the Proton acceptor. NAD(+)-binding residues include Arg312 and Gln341. 312–313 lines the substrate pocket; sequence RN.

This sequence belongs to the NAD-dependent glycerol-3-phosphate dehydrogenase family. Homodimer.

It is found in the cytoplasm. It carries out the reaction sn-glycerol 3-phosphate + NAD(+) = dihydroxyacetone phosphate + NADH + H(+). In Caenorhabditis elegans, this protein is Probable glycerol-3-phosphate dehydrogenase 2 (gpdh-2).